Here is a 270-residue protein sequence, read N- to C-terminus: UPF0354 protein BPUM_2629 (270 aa).

The protein belongs to the UPF0354 family.

The protein is UPF0354 protein BPUM_2629 of Bacillus pumilus (strain SAFR-032).